We begin with the raw amino-acid sequence, 178 residues long: Fatty-acid and retinol-binding protein 1 (178 aa).

Residues Met1 to Ala16 form the signal peptide. N-linked (GlcNAc...) asparagine glycans are attached at residues Asn44 and Asn75. Coiled-coil stretches lie at residues Asp67–Asn89 and Gln122–Thr154. N-linked (GlcNAc...) asparagine glycosylation occurs at Asn157.

It belongs to the fatty-acid and retinol-binding protein (FARBP) family. In terms of processing, N-glycosylated.

The protein resides in the secreted. Its function is as follows. Binds retinol and different fatty acids. The protein is Fatty-acid and retinol-binding protein 1 of Onchocerca dukei (Filarial nematode worm).